Reading from the N-terminus, the 590-residue chain is V-type ATP synthase alpha chain (590 aa).

Position 234–241 (234–241 (GGFGAGKT)) interacts with ATP.

It belongs to the ATPase alpha/beta chains family.

The catalysed reaction is ATP + H2O + 4 H(+)(in) = ADP + phosphate + 5 H(+)(out). In terms of biological role, produces ATP from ADP in the presence of a proton gradient across the membrane. The V-type alpha chain is a catalytic subunit. In Halothermothrix orenii (strain H 168 / OCM 544 / DSM 9562), this protein is V-type ATP synthase alpha chain.